A 360-amino-acid chain; its full sequence is Glycerol-1-phosphate dehydrogenase [NAD(P)+] (360 aa).

NAD(+)-binding positions include 108-112 (GRVID) and 130-133 (TAAS). Residue aspartate 135 coordinates substrate. Serine 139 lines the NAD(+) pocket. Residue aspartate 182 participates in substrate binding. 2 residues coordinate Zn(2+): aspartate 182 and histidine 262. Histidine 266 serves as a coordination point for substrate. A Zn(2+)-binding site is contributed by histidine 278.

Belongs to the glycerol-1-phosphate dehydrogenase family. Zn(2+) is required as a cofactor.

The protein resides in the cytoplasm. It catalyses the reaction sn-glycerol 1-phosphate + NAD(+) = dihydroxyacetone phosphate + NADH + H(+). The catalysed reaction is sn-glycerol 1-phosphate + NADP(+) = dihydroxyacetone phosphate + NADPH + H(+). It functions in the pathway membrane lipid metabolism; glycerophospholipid metabolism. Catalyzes the NAD(P)H-dependent reduction of dihydroxyacetonephosphate (DHAP or glycerone phosphate) to glycerol 1-phosphate (G1P). The G1P thus generated is used as the glycerophosphate backbone of phospholipids in the cellular membranes of Archaea. The polypeptide is Glycerol-1-phosphate dehydrogenase [NAD(P)+] (Methanocorpusculum labreanum (strain ATCC 43576 / DSM 4855 / Z)).